Consider the following 411-residue polypeptide: Adenylosuccinate synthetase (411 aa).

GTP-binding positions include 11–17 (GDEGKGK) and 39–41 (GHT). Catalysis depends on D12, which acts as the Proton acceptor. Mg(2+) contacts are provided by D12 and G39. IMP contacts are provided by residues 12–15 (DEGK), 37–40 (NAGH), T121, R135, Q215, T230, and R294. H40 (proton donor) is an active-site residue. 290–296 (TTTKRPR) lines the substrate pocket. GTP contacts are provided by residues R296, 322-324 (KLD), and 400-402 (STS).

It belongs to the adenylosuccinate synthetase family. As to quaternary structure, homodimer. The cofactor is Mg(2+).

Its subcellular location is the cytoplasm. It carries out the reaction IMP + L-aspartate + GTP = N(6)-(1,2-dicarboxyethyl)-AMP + GDP + phosphate + 2 H(+). It participates in purine metabolism; AMP biosynthesis via de novo pathway; AMP from IMP: step 1/2. Functionally, plays an important role in the de novo pathway of purine nucleotide biosynthesis. Catalyzes the first committed step in the biosynthesis of AMP from IMP. This is Adenylosuccinate synthetase from Helicobacter pylori (strain G27).